A 423-amino-acid chain; its full sequence is D-tagatose-1,6-bisphosphate aldolase subunit GatZ (423 aa).

The protein belongs to the GatZ/KbaZ family. GatZ subfamily. As to quaternary structure, forms a complex with GatY.

It participates in carbohydrate metabolism; D-tagatose 6-phosphate degradation; D-glyceraldehyde 3-phosphate and glycerone phosphate from D-tagatose 6-phosphate: step 2/2. Its function is as follows. Component of the tagatose-1,6-bisphosphate aldolase GatYZ that is required for full activity and stability of the Y subunit. Could have a chaperone-like function for the proper and stable folding of GatY. When expressed alone, GatZ does not show any aldolase activity. Is involved in the catabolism of galactitol. The protein is D-tagatose-1,6-bisphosphate aldolase subunit GatZ of Salmonella enteritidis PT4 (strain P125109).